The following is a 47-amino-acid chain: Large ribosomal subunit protein uL14c (47 aa).

This sequence belongs to the universal ribosomal protein uL14 family. Part of the 50S ribosomal subunit.

The protein resides in the plastid. It localises to the chloroplast. Binds to 23S rRNA. The chain is Large ribosomal subunit protein uL14c (rpl14) from Vigna unguiculata (Cowpea).